The chain runs to 354 residues: Histidinol-phosphate aminotransferase (354 aa).

N6-(pyridoxal phosphate)lysine is present on lysine 208.

The protein belongs to the class-II pyridoxal-phosphate-dependent aminotransferase family. Histidinol-phosphate aminotransferase subfamily. Homodimer. It depends on pyridoxal 5'-phosphate as a cofactor.

It carries out the reaction L-histidinol phosphate + 2-oxoglutarate = 3-(imidazol-4-yl)-2-oxopropyl phosphate + L-glutamate. The protein operates within amino-acid biosynthesis; L-histidine biosynthesis; L-histidine from 5-phospho-alpha-D-ribose 1-diphosphate: step 7/9. The chain is Histidinol-phosphate aminotransferase from Aquifex aeolicus (strain VF5).